The chain runs to 675 residues: UvrABC system protein B (675 aa).

Residues 32 to 417 enclose the Helicase ATP-binding domain; sequence EGLSDGLAYQ…EHAGQVVEQV (386 aa). Residue 45-52 participates in ATP binding; that stretch reads GVTGSGKT. Positions 98–121 match the Beta-hairpin motif; it reads YYDYYQPEAYVPSRDLFIEKDSAI. Residues 436-602 form the Helicase C-terminal domain; that stretch reads QVDDLMSEIN…QIKKQVKDII (167 aa). Residues 634 to 669 form the UVR domain; it reads IKEIAKLEKAMQQAARDLQFEEAAVLRDRIRNIKEN.

The protein belongs to the UvrB family. Forms a heterotetramer with UvrA during the search for lesions. Interacts with UvrC in an incision complex.

The protein localises to the cytoplasm. Its function is as follows. The UvrABC repair system catalyzes the recognition and processing of DNA lesions. A damage recognition complex composed of 2 UvrA and 2 UvrB subunits scans DNA for abnormalities. Upon binding of the UvrA(2)B(2) complex to a putative damaged site, the DNA wraps around one UvrB monomer. DNA wrap is dependent on ATP binding by UvrB and probably causes local melting of the DNA helix, facilitating insertion of UvrB beta-hairpin between the DNA strands. Then UvrB probes one DNA strand for the presence of a lesion. If a lesion is found the UvrA subunits dissociate and the UvrB-DNA preincision complex is formed. This complex is subsequently bound by UvrC and the second UvrB is released. If no lesion is found, the DNA wraps around the other UvrB subunit that will check the other stand for damage. This chain is UvrABC system protein B, found in Neisseria gonorrhoeae.